We begin with the raw amino-acid sequence, 245 residues long: Chromosome partition protein MukE (245 aa).

The segment at 213-245 (PESIAAEKATADDESAVSNEEDFEYDDNQEGAE) is disordered. The span at 224 to 245 (DDESAVSNEEDFEYDDNQEGAE) shows a compositional bias: acidic residues.

Belongs to the MukE family. Interacts, and probably forms a ternary complex, with MukF and MukB. The complex formation is stimulated by calcium or magnesium.

Its subcellular location is the cytoplasm. It is found in the nucleoid. In terms of biological role, involved in chromosome condensation, segregation and cell cycle progression. May participate in facilitating chromosome segregation by condensation DNA from both sides of a centrally located replisome during cell division. Probably acts via its interaction with MukB and MukF. This Actinobacillus succinogenes (strain ATCC 55618 / DSM 22257 / CCUG 43843 / 130Z) protein is Chromosome partition protein MukE.